Consider the following 397-residue polypeptide: Tryptophan synthase beta chain (397 aa).

Lys88 bears the N6-(pyridoxal phosphate)lysine mark.

This sequence belongs to the TrpB family. In terms of assembly, tetramer of two alpha and two beta chains. Pyridoxal 5'-phosphate is required as a cofactor.

The enzyme catalyses (1S,2R)-1-C-(indol-3-yl)glycerol 3-phosphate + L-serine = D-glyceraldehyde 3-phosphate + L-tryptophan + H2O. Its pathway is amino-acid biosynthesis; L-tryptophan biosynthesis; L-tryptophan from chorismate: step 5/5. In terms of biological role, the beta subunit is responsible for the synthesis of L-tryptophan from indole and L-serine. The protein is Tryptophan synthase beta chain (trpB) of Haemophilus influenzae (strain ATCC 51907 / DSM 11121 / KW20 / Rd).